The chain runs to 169 residues: Nucleoside diphosphate kinase 3 (169 aa).

K29, R105, T111, R122, V129, and N132 together coordinate ADP. The Pros-phosphohistidine intermediate role is filled by H135.

The protein belongs to the NDK family. In terms of assembly, homohexamer. Interacts (via its N-terminal region) with KAT5; this interaction enables recruitment of NME3 at DNA damage sites where it plays a role in the repair of DNA. Found in association with several ciliary nephronophthisis proteins, including NEK8, CEP164, ANKS6. Mg(2+) is required as a cofactor.

The protein localises to the mitochondrion outer membrane. It is found in the cytoplasm. Its subcellular location is the cytoskeleton. It localises to the cilium basal body. The catalysed reaction is a 2'-deoxyribonucleoside 5'-diphosphate + ATP = a 2'-deoxyribonucleoside 5'-triphosphate + ADP. The enzyme catalyses a ribonucleoside 5'-diphosphate + ATP = a ribonucleoside 5'-triphosphate + ADP. Functionally, catalyzes the phosphorylation of ribonucleosides and deoxyribonucleoside diphosphates, other than ATP, into the corresponding triphosphates with ATP as the major phosphate donor. The ATP gamma phosphate is transferred to the nucleoside diphosphate beta phosphate via a ping-pong mechanism, using a phosphorylated active-site intermediate. Through the catalyzed exchange of gamma-phosphate between di- and triphosphonucleosides participates in regulation of intracellular nucleotide homeostasis. Inhibits granulocyte differentiation. May be required for ciliary function during renal development. In terms of biological role, independently of its kinase activity, facilitates mitochondrial tethering prior to membrane fusion through its direct membrane-binding and hexamerization. Implicated in repair of both single- and double-stranded breaks in DNA through its association with the ribonucleotide reductase complex (RNR complex) via its interaction with the histone acetyltransferase KAT5, this interaction enables recruitment of NME3 at DNA damage sites where it plays a role in the repair of DNA, independently of its kinase activity. This Homo sapiens (Human) protein is Nucleoside diphosphate kinase 3.